Consider the following 313-residue polypeptide: Hydroxyphenylpyruvate reductase (313 aa).

Residues 152–155, 174–176, and isoleucine 230 contribute to the NADP(+) site; these read LGRI and SRS. Arginine 232 is a catalytic residue. NADP(+) is bound at residue aspartate 256. Glutamate 261 is an active-site residue. Catalysis depends on histidine 279, which acts as the Proton donor.

It belongs to the D-isomer specific 2-hydroxyacid dehydrogenase family.

It catalyses the reaction (2R)-2-hydroxy-3-(4-hydroxyphenyl)propanoate + NAD(+) = 3-(4-hydroxyphenyl)pyruvate + NADH + H(+). It carries out the reaction (2R)-2-hydroxy-3-(4-hydroxyphenyl)propanoate + NADP(+) = 3-(4-hydroxyphenyl)pyruvate + NADPH + H(+). The enzyme catalyses (2R)-3-(3,4-dihydroxyphenyl)lactate + NADP(+) = 3-(3,4-dihydroxyphenyl)pyruvate + NADPH + H(+). The catalysed reaction is (2R)-3-(3,4-dihydroxyphenyl)lactate + NAD(+) = 3-(3,4-dihydroxyphenyl)pyruvate + NADH + H(+). Functionally, catalyzes the NAD(P)H-dependent reduction of 4-hydroxyphenylpyruvate to 4-hydroxyphenyllactate and 3,4-dihydroxyphenylpyruvate to 3,4-dihydroxyphenyllactate in the biosynthesis of rosmarinic acid. Rosmarinic acid is an ester of caffeic acid and 3,4-dihydroxyphenyllactic acid. NADP is the preferred substrate. In Plectranthus scutellarioides (Coleus), this protein is Hydroxyphenylpyruvate reductase (HPPR).